A 494-amino-acid chain; its full sequence is Cytochrome c-552 (494 aa).

The first 31 residues, 1-31 (MEKKLKSWQGWLLFGGTMVVVFVLGMIAASV), serve as a signal peptide directing secretion. Position 116 (H116) interacts with heme c. Heme contacts are provided by C144, C147, and K148. Heme c is bound by residues C182, C185, H186, C224, C227, and H228. E230, Y231, K276, and Q278 together coordinate Ca(2+). Y231 is a substrate binding site. H279 is a binding site for substrate. Heme c-binding residues include H290, C297, C300, H301, H315, C328, C331, H332, and H407.

The protein belongs to the cytochrome c-552 family. It depends on Ca(2+) as a cofactor. Requires heme c as cofactor.

It localises to the periplasm. The enzyme catalyses 6 Fe(III)-[cytochrome c] + NH4(+) + 2 H2O = 6 Fe(II)-[cytochrome c] + nitrite + 8 H(+). It participates in nitrogen metabolism; nitrate reduction (assimilation). Catalyzes the reduction of nitrite to ammonia, consuming six electrons in the process. The polypeptide is Cytochrome c-552 (Parabacteroides distasonis (strain ATCC 8503 / DSM 20701 / CIP 104284 / JCM 5825 / NCTC 11152)).